Consider the following 439-residue polypeptide: Fibroleukin (439 aa).

Positions Met-1 to Ala-23 are cleaved as a signal peptide. The N-linked (GlcNAc...) asparagine glycan is linked to Asn-25. Residues Ser-73–Asn-165 are a coiled coil. Residues Ala-103–Gly-126 form a disordered region. Residues Asn-179, Asn-235, Asn-263, and Asn-336 are each glycosylated (N-linked (GlcNAc...) asparagine). Residues Pro-204–His-436 form the Fibrinogen C-terminal domain. A disulfide bridge links Cys-213 with Cys-242. A disulfide bond links Cys-371 and Cys-384.

Homotetramer; disulfide-linked. As to expression, constitutively expressed in cytotoxic T-cells.

The protein resides in the secreted. May play a role in physiologic lymphocyte functions at mucosal sites. This chain is Fibroleukin (FGL2), found in Homo sapiens (Human).